A 212-amino-acid polypeptide reads, in one-letter code: Large ribosomal subunit protein uL1 (212 aa).

This sequence belongs to the universal ribosomal protein uL1 family. In terms of assembly, part of the 50S ribosomal subunit.

In terms of biological role, binds directly to 23S rRNA. Probably involved in E site tRNA release. Functionally, protein L1 is also a translational repressor protein, it controls the translation of its operon by binding to its mRNA. In Haloquadratum walsbyi (strain DSM 16790 / HBSQ001), this protein is Large ribosomal subunit protein uL1.